The chain runs to 224 residues: V-type ATP synthase subunit D (224 aa).

Positions 205–214 are enriched in basic and acidic residues; that stretch reads AKAKQQRKDI. A disordered region spans residues 205-224; that stretch reads AKAKQQRKDIQSGNHGSAAD. Polar residues predominate over residues 215–224; it reads QSGNHGSAAD.

Belongs to the V-ATPase D subunit family.

Its function is as follows. Produces ATP from ADP in the presence of a proton gradient across the membrane. This chain is V-type ATP synthase subunit D, found in Deinococcus deserti (strain DSM 17065 / CIP 109153 / LMG 22923 / VCD115).